A 440-amino-acid chain; its full sequence is tRNA modification GTPase MnmE (440 aa).

(6S)-5-formyl-5,6,7,8-tetrahydrofolate-binding residues include arginine 22, glutamate 79, and lysine 118. One can recognise a TrmE-type G domain in the interval 214-366 (GLIFTILGKP…LKTMLEAEAR (153 aa)). GTP-binding positions include 224–229 (NAGKSS), 243–249 (SSQPGTT), and 268–271 (DTAG). Residues serine 228 and threonine 249 each coordinate Mg(2+). Lysine 440 serves as a coordination point for (6S)-5-formyl-5,6,7,8-tetrahydrofolate.

This sequence belongs to the TRAFAC class TrmE-Era-EngA-EngB-Septin-like GTPase superfamily. TrmE GTPase family. Homodimer. Heterotetramer of two MnmE and two MnmG subunits. K(+) is required as a cofactor.

Its subcellular location is the cytoplasm. Exhibits a very high intrinsic GTPase hydrolysis rate. Involved in the addition of a carboxymethylaminomethyl (cmnm) group at the wobble position (U34) of certain tRNAs, forming tRNA-cmnm(5)s(2)U34. This Granulibacter bethesdensis (strain ATCC BAA-1260 / CGDNIH1) protein is tRNA modification GTPase MnmE.